The following is a 150-amino-acid chain: Deoxyuridine 5'-triphosphate nucleotidohydrolase (150 aa).

Substrate is bound by residues 69–71 (RSG), N82, and 86–88 (LID).

This sequence belongs to the dUTPase family. It depends on Mg(2+) as a cofactor.

It carries out the reaction dUTP + H2O = dUMP + diphosphate + H(+). Its pathway is pyrimidine metabolism; dUMP biosynthesis; dUMP from dCTP (dUTP route): step 2/2. In terms of biological role, this enzyme is involved in nucleotide metabolism: it produces dUMP, the immediate precursor of thymidine nucleotides and it decreases the intracellular concentration of dUTP so that uracil cannot be incorporated into DNA. In Chromobacterium violaceum (strain ATCC 12472 / DSM 30191 / JCM 1249 / CCUG 213 / NBRC 12614 / NCIMB 9131 / NCTC 9757 / MK), this protein is Deoxyuridine 5'-triphosphate nucleotidohydrolase.